A 166-amino-acid polypeptide reads, in one-letter code: Large ribosomal subunit protein uL10 (166 aa).

This sequence belongs to the universal ribosomal protein uL10 family. As to quaternary structure, part of the ribosomal stalk of the 50S ribosomal subunit. The N-terminus interacts with L11 and the large rRNA to form the base of the stalk. The C-terminus forms an elongated spine to which L12 dimers bind in a sequential fashion forming a multimeric L10(L12)X complex.

In terms of biological role, forms part of the ribosomal stalk, playing a central role in the interaction of the ribosome with GTP-bound translation factors. The chain is Large ribosomal subunit protein uL10 from Bacillus cereus (strain ATCC 14579 / DSM 31 / CCUG 7414 / JCM 2152 / NBRC 15305 / NCIMB 9373 / NCTC 2599 / NRRL B-3711).